The primary structure comprises 467 residues: Glycosyl hydrolase family 109 protein (467 aa).

A signal peptide (tat-type signal) is located at residues 1 to 31 (MKNFNRRAFLKAAGATTAGLVTSGLILPASA). NAD(+)-binding positions include 66–67 (QR), Asp-88, 137–140 (WQWH), 157–158 (EV), and Asn-186. Residues Tyr-215, Arg-234, 246 to 249 (YPTH), and Tyr-328 contribute to the substrate site. Tyr-246 provides a ligand contact to NAD(+).

This sequence belongs to the Gfo/Idh/MocA family. Glycosyl hydrolase 109 subfamily. Requires NAD(+) as cofactor. Predicted to be exported by the Tat system. The position of the signal peptide cleavage has not been experimentally proven.

Functionally, glycosidase. In Shewanella woodyi (strain ATCC 51908 / MS32), this protein is Glycosyl hydrolase family 109 protein.